A 553-amino-acid chain; its full sequence is MDEVDKIIMHQLHQVDAGIEPTDELASFTPELVVRAVSSCLTEIRPELEVPRSLPGGAMAQRFSVATGLAERCKESGYHGDIGYQTFLYPNPIELRRLLMFLIEQLPRERQATDDLTGKSHPLSGREMLQRQIRKKLTAQLKAMWVPQFCRAVGNRKSHGCSSLCIDFRPKLNLNVPSANLEERTKEVQQYFDQQAPNLFQQTASSSYDLIASVLHKNDLERWGQGLTDSGMFLLASEDPVIPMVLATEKPSATAAEMTPLEELTDEVQKLRTQCETLLGERKAYTARIGALKQRESEATKELADIQPLLKLHERTCLVLADPEQNVTKLEALLQATEAKRRTLTQQWQDYRLPLLETLETLKTAKEAQHVQSIRSGIEQLEQELKEKTQQHNDLNTALRTATQSLAPRKEYTRRIHEFIGNIRKQRADIFKVLDDTRQLQKQLNVVGAQLQRQFNYTDDLLFQSAKHDLHAKKAYKLLAQLHANCSELVECVALTGNVTKQIRELEVQIDGEKLKNVLTSLQQITGDIQKFEQSIQELQSQISTMENGVAKA.

Coiled coils occupy residues 261-404 (LEEL…TATQ) and 498-553 (NVTK…VAKA).

This sequence belongs to the CCDC22 family.

The polypeptide is Coiled-coil domain-containing protein 22 homolog (Drosophila pseudoobscura pseudoobscura (Fruit fly)).